Here is a 348-residue protein sequence, read N- to C-terminus: Dihydroorotate dehydrogenase (quinone) (348 aa).

Residues A60–K64 and T84 contribute to the FMN site. K64 provides a ligand contact to substrate. N109–F113 contacts substrate. FMN is bound by residues N138 and N169. N169 provides a ligand contact to substrate. S172 acts as the Nucleophile in catalysis. A substrate-binding site is contributed by N174. Residues K207 and S235 each coordinate FMN. N236–T237 contributes to the substrate binding site. FMN-binding positions include G258, G287, and Y308 to S309.

It belongs to the dihydroorotate dehydrogenase family. Type 2 subfamily. In terms of assembly, monomer. FMN is required as a cofactor.

Its subcellular location is the cell membrane. It catalyses the reaction (S)-dihydroorotate + a quinone = orotate + a quinol. It participates in pyrimidine metabolism; UMP biosynthesis via de novo pathway; orotate from (S)-dihydroorotate (quinone route): step 1/1. Functionally, catalyzes the conversion of dihydroorotate to orotate with quinone as electron acceptor. The protein is Dihydroorotate dehydrogenase (quinone) of Parvibaculum lavamentivorans (strain DS-1 / DSM 13023 / NCIMB 13966).